A 906-amino-acid chain; its full sequence is Alanine--tRNA ligase (906 aa).

Residues H600, H604, C703, and H707 each contribute to the Zn(2+) site.

The protein belongs to the class-II aminoacyl-tRNA synthetase family. As to quaternary structure, homodimer. Zn(2+) is required as a cofactor.

The protein resides in the cytoplasm. The catalysed reaction is tRNA(Ala) + L-alanine + ATP = L-alanyl-tRNA(Ala) + AMP + diphosphate. In terms of biological role, catalyzes the attachment of alanine to tRNA(Ala) in a two-step reaction: alanine is first activated by ATP to form Ala-AMP and then transferred to the acceptor end of tRNA(Ala). Incorrectly charged aminoacyl-tRNA(Ala) is also edited in situ by the editing domain. This Archaeoglobus fulgidus (strain ATCC 49558 / DSM 4304 / JCM 9628 / NBRC 100126 / VC-16) protein is Alanine--tRNA ligase (alaS).